A 251-amino-acid chain; its full sequence is Cyclohexanol dehydrogenase (251 aa).

NAD(+) is bound by residues Asp-42, Asn-95, Tyr-161, Lys-165, Ile-194, and Thr-196. The active-site Proton acceptor is the Tyr-161.

Belongs to the short-chain dehydrogenases/reductases (SDR) family.

The enzyme catalyses cyclohexanol + NAD(+) = cyclohexanone + NADH + H(+). Its function is as follows. Catalyzes the oxidation of cyclohexanol to cyclohexanone. Required for the conversion of cyclohexanol to adipic acid. The chain is Cyclohexanol dehydrogenase from Acinetobacter sp. (strain SE19).